The chain runs to 159 residues: Succinate dehydrogenase [ubiquinone] cytochrome b small subunit, mitochondrial (159 aa).

The N-terminal 56 residues, 1–56, are a transit peptide targeting the mitochondrion; sequence MAVLWRLSAVCGAQGGRALLLRTPVVRPAHISAFLQDRPIPEWCGVQHIHLSPGHH. Residues 57 to 63 lie on the Mitochondrial matrix side of the membrane; sequence SGSKAAS. The helical transmembrane segment at 64–85 threads the bilayer; that stretch reads LHWTSERVVSVLLLGLLPAAYL. The Mitochondrial intermembrane segment spans residues 86 to 90; it reads NPCSA. The helical transmembrane segment at 91-111 threads the bilayer; it reads MDYSLAATLTLHGHWGLGQVV. Residue H102 participates in heme b binding. At 112–120 the chain is on the mitochondrial matrix side; sequence TDYVHGDAS. Y114 is a binding site for a ubiquinone. The chain crosses the membrane as a helical span at residues 121 to 142; sequence QKAAKAGLLALSALTFAGLCYF. Topologically, residues 143-159 are mitochondrial intermembrane; that stretch reads NYHDVGICKAVAMLWKL.

Belongs to the CybS family. Component of complex II composed of four subunits: the flavoprotein (FP) SDHA, iron-sulfur protein (IP) SDHB, and a cytochrome b560 composed of SDHC and SDHD.

Its subcellular location is the mitochondrion inner membrane. It functions in the pathway carbohydrate metabolism; tricarboxylic acid cycle. Its function is as follows. Membrane-anchoring subunit of succinate dehydrogenase (SDH) that is involved in complex II of the mitochondrial electron transport chain and is responsible for transferring electrons from succinate to ubiquinone (coenzyme Q). SDH also oxidizes malate to the non-canonical enol form of oxaloacetate, enol-oxaloacetate. Enol-oxaloacetate, which is a potent inhibitor of the succinate dehydrogenase activity, is further isomerized into keto-oxaloacetate. This is Succinate dehydrogenase [ubiquinone] cytochrome b small subunit, mitochondrial (SDHD) from Pongo abelii (Sumatran orangutan).